The following is a 725-amino-acid chain: Palmitoyltransferase AKR1 (725 aa).

At 1 to 303 (MGTIAMASIN…LKDKRSFVTR (303 aa)) the chain is on the cytoplasmic side. 5 ANK repeats span residues 84 to 113 (EGIT…EINR), 118 to 147 (SIAT…DPLV), 151 to 180 (QGYN…PVDV), 184 to 213 (FGHT…SVHA), and 217 to 246 (QGFT…DRFA). A helical transmembrane segment spans residues 304-324 (FLFFWPFVLVWAMLVAMSSAP). Over 325 to 326 (VY) the chain is Lumenal. A helical membrane pass occupies residues 327 to 347 (IGVPLGIAAVYAIQWVAQQVL). The Cytoplasmic segment spans residues 348–364 (EYAPSDMRHFHKTPWLT). Residues 365 to 385 (GIFAATLFWTGVNWLTTVLFA) traverse the membrane as a helical segment. Residues 386 to 397 (TTLGAPEGKGHG) are Lumenal-facing. A helical membrane pass occupies residues 398–418 (ILNFLFALFFGFTVYFYIASM). At 419 to 495 (RYDPGFVPKM…NCVGINNHRH (77 aa)) the chain is on the cytoplasmic side. Residues 451–501 (NFCVTCMIQTPLRSKHCRRCQRCVAKHDHHCPWVYNCVGINNHRHFFFYLI) form the DHHC domain. Residue Cys-481 is the S-palmitoyl cysteine intermediate of the active site. Residues 496-516 (FFFYLISLTMGIVSYDFLLYY) form a helical membrane-spanning segment. The Lumenal segment spans residues 517 to 547 (YFDTVSKNASETCNVLSPTLCKYINADSYTS). A helical transmembrane segment spans residues 548–568 (ILAIWITMQLLWVTMLLFTQF). Topologically, residues 569–725 (IQVARAMTTY…YEAVGTEDVV (157 aa)) are cytoplasmic.

The protein belongs to the DHHC palmitoyltransferase family. AKR/ZDHHC17 subfamily.

The protein resides in the early endosome membrane. It localises to the golgi apparatus membrane. It carries out the reaction L-cysteinyl-[protein] + hexadecanoyl-CoA = S-hexadecanoyl-L-cysteinyl-[protein] + CoA. Palmitoyltransferase specific for casein kinase 1. This is Palmitoyltransferase AKR1 (AKR1) from Gibberella zeae (strain ATCC MYA-4620 / CBS 123657 / FGSC 9075 / NRRL 31084 / PH-1) (Wheat head blight fungus).